Consider the following 134-residue polypeptide: Profilin-1 (134 aa).

An intrachain disulfide couples C13 to C118. An Involved in PIP2 interaction motif is present at residues 84 to 100; sequence AVIRGKKGSGGITIKKT. T114 bears the Phosphothreonine mark.

This sequence belongs to the profilin family. Occurs in many kinds of cells as a complex with monomeric actin in a 1:1 ratio. Phosphorylated by MAP kinases.

It localises to the cytoplasm. The protein localises to the cytoskeleton. Binds to actin and affects the structure of the cytoskeleton. At high concentrations, profilin prevents the polymerization of actin, whereas it enhances it at low concentrations. By binding to PIP2, it inhibits the formation of IP3 and DG. This chain is Profilin-1 (PRO1), found in Olea europaea (Common olive).